Here is a 220-residue protein sequence, read N- to C-terminus: Cytidylate kinase (220 aa).

Position 10–18 (10–18 (GPAGAGKST)) interacts with ATP.

It belongs to the cytidylate kinase family. Type 1 subfamily.

It is found in the cytoplasm. It carries out the reaction CMP + ATP = CDP + ADP. The enzyme catalyses dCMP + ATP = dCDP + ADP. This is Cytidylate kinase from Alkaliphilus metalliredigens (strain QYMF).